Reading from the N-terminus, the 161-residue chain is Globin CTT-VIIB-6 (161 aa).

A signal peptide spans 1 to 16 (MKFFAVLALCIVGAIA). The Globin domain occupies 18-161 (PLTADEASLV…NTFAIVVPRL (144 aa)). Heme b contacts are provided by H76 and H111.

Belongs to the globin family. In terms of assembly, homodimer.

In Chironomus thummi thummi (Midge), this protein is Globin CTT-VIIB-6 (CTT-7B6).